The primary structure comprises 426 residues: Gamma-glutamyl phosphate reductase (426 aa).

It belongs to the gamma-glutamyl phosphate reductase family.

Its subcellular location is the cytoplasm. It carries out the reaction L-glutamate 5-semialdehyde + phosphate + NADP(+) = L-glutamyl 5-phosphate + NADPH + H(+). It functions in the pathway amino-acid biosynthesis; L-proline biosynthesis; L-glutamate 5-semialdehyde from L-glutamate: step 2/2. In terms of biological role, catalyzes the NADPH-dependent reduction of L-glutamate 5-phosphate into L-glutamate 5-semialdehyde and phosphate. The product spontaneously undergoes cyclization to form 1-pyrroline-5-carboxylate. The sequence is that of Gamma-glutamyl phosphate reductase from Cupriavidus pinatubonensis (strain JMP 134 / LMG 1197) (Cupriavidus necator (strain JMP 134)).